The chain runs to 182 residues: uncharacterized protein (182 aa).

A coiled-coil region spans residues 66 to 133 (QKRKRREIKV…NLEIETNSDS (68 aa)).

This is an uncharacterized protein from Acanthamoeba polyphaga (Amoeba).